Here is a 206-residue protein sequence, read N- to C-terminus: Large ribosomal subunit protein uL4 (206 aa).

This sequence belongs to the universal ribosomal protein uL4 family. Part of the 50S ribosomal subunit.

One of the primary rRNA binding proteins, this protein initially binds near the 5'-end of the 23S rRNA. It is important during the early stages of 50S assembly. It makes multiple contacts with different domains of the 23S rRNA in the assembled 50S subunit and ribosome. In terms of biological role, forms part of the polypeptide exit tunnel. The chain is Large ribosomal subunit protein uL4 from Cereibacter sphaeroides (strain ATCC 17025 / ATH 2.4.3) (Rhodobacter sphaeroides).